Reading from the N-terminus, the 288-residue chain is MPMIHHHISDLRAALQPYRAAPRIALVPTMGNLHEGHLELVNIAKQHADIVVVSIFVNPTQFGVGEDFDSYPRTLDEDVAKLATVGADYVFAPSIDEMYPVLPPPTTILAGTITEQLCGKTRPTHFDGVGIVVSKLFNIVQPNVAVFGQKDYQQLAIIKQLVRDLSYSIEIIGAPIVRAADGLALSSRNQYLSESERQIAPILQQELQYLAKQITDKQQPLDVLLTAARERITSAGFIIDYLEIKTAELTAVDDDSVNEHQELVVLVAAGLGRARLLDNQLVTINKSL.

Residue 30-37 (MGNLHEGH) coordinates ATP. His-37 acts as the Proton donor in catalysis. Residue Gln-61 coordinates (R)-pantoate. Gln-61 lines the beta-alanine pocket. 148 to 151 (GQKD) contributes to the ATP binding site. Gln-154 contributes to the (R)-pantoate binding site. Residues Val-177 and 185–188 (LSSR) each bind ATP.

It belongs to the pantothenate synthetase family. Homodimer.

The protein localises to the cytoplasm. It carries out the reaction (R)-pantoate + beta-alanine + ATP = (R)-pantothenate + AMP + diphosphate + H(+). Its pathway is cofactor biosynthesis; (R)-pantothenate biosynthesis; (R)-pantothenate from (R)-pantoate and beta-alanine: step 1/1. Catalyzes the condensation of pantoate with beta-alanine in an ATP-dependent reaction via a pantoyl-adenylate intermediate. The sequence is that of Pantothenate synthetase from Psychrobacter arcticus (strain DSM 17307 / VKM B-2377 / 273-4).